A 566-amino-acid chain; its full sequence is Bicarbonate transporter BicA (566 aa).

Residues Met1–Asp15 are Cytoplasmic-facing. Residues Ile16 to Ala36 traverse the membrane as a helical segment. The Periplasmic portion of the chain corresponds to Ser37 to Glu42. Residues Ala43–Thr63 form a helical membrane-spanning segment. Leu64 is a topological domain (cytoplasmic). A helical transmembrane segment spans residues Ile65–Ala85. Thr69 contacts hydrogencarbonate. The Periplasmic segment spans residues Ser86 to Gly93. Residues Leu94–Leu114 traverse the membrane as a helical segment. Residues Lys115 to Thr126 are Cytoplasmic-facing. A helical membrane pass occupies residues Val127–Phe147. Residues Leu148–Ser169 lie on the Periplasmic side of the membrane. Residues Asn170 to Pro190 form a helical membrane-spanning segment. Residues Glu191–Val196 are Cytoplasmic-facing. Residues Ile197–Pro217 traverse the membrane as a helical segment. The Periplasmic portion of the chain corresponds to Glu218 to Arg247. Residues Met248–Val268 traverse the membrane as a helical segment. Residues Asp262, Thr266, and Gly304 each contribute to the Na(+) site. Topologically, residues Val269–Arg318 are cytoplasmic. Ala305 is a hydrogencarbonate binding site. Residue Thr306 coordinates Na(+). A helical transmembrane segment spans residues Thr319–Ser339. A topological domain (periplasmic) is located at residue Leu340. Residues Thr341 to Ile361 form a helical membrane-spanning segment. Residues Asp362–Glu371 lie on the Cytoplasmic side of the membrane. A helical membrane pass occupies residues Ile372–Leu392. Position 393 (Ile393) is a topological domain, periplasmic. Residues Val394–Leu414 traverse the membrane as a helical segment. The Cytoplasmic portion of the chain corresponds to Gln415–Gly566. The region spanning Lys436–Ala546 is the STAS domain.

Belongs to the SLC26A/SulP transporter (TC 2.A.53) family.

Its subcellular location is the cell inner membrane. Functionally, low/medium affinity, Na(+)-dependent bicarbonate transporter. The protein is Bicarbonate transporter BicA (bicA) of Picosynechococcus sp. (strain ATCC 27264 / PCC 7002 / PR-6) (Agmenellum quadruplicatum).